Consider the following 173-residue polypeptide: Probable chemoreceptor glutamine deamidase CheD 2 (173 aa).

Belongs to the CheD family.

The enzyme catalyses L-glutaminyl-[protein] + H2O = L-glutamyl-[protein] + NH4(+). In terms of biological role, probably deamidates glutamine residues to glutamate on methyl-accepting chemotaxis receptors (MCPs), playing an important role in chemotaxis. This chain is Probable chemoreceptor glutamine deamidase CheD 2, found in Albidiferax ferrireducens (strain ATCC BAA-621 / DSM 15236 / T118) (Rhodoferax ferrireducens).